The chain runs to 533 residues: Malate synthase A (533 aa).

The active-site Proton acceptor is R166. Catalysis depends on D447, which acts as the Proton donor.

Belongs to the malate synthase family.

The protein resides in the cytoplasm. It catalyses the reaction glyoxylate + acetyl-CoA + H2O = (S)-malate + CoA + H(+). It functions in the pathway carbohydrate metabolism; glyoxylate cycle; (S)-malate from isocitrate: step 2/2. The polypeptide is Malate synthase A (aceB) (Escherichia coli (strain K12)).